A 450-amino-acid polypeptide reads, in one-letter code: Tubulin alpha chain, testis-specific (450 aa).

The MREC motif motif lies at 1–4 (MREC). Gln-11 is a GTP binding site. The residue at position 40 (Lys-40) is an N6-acetyllysine. GTP-binding residues include Glu-71, Ser-140, Gly-144, Thr-145, Thr-179, Asn-206, and Asn-228. Glu-71 contributes to the Mg(2+) binding site. The active site involves Glu-254.

This sequence belongs to the tubulin family. Dimer of alpha and beta chains. A typical microtubule is a hollow water-filled tube with an outer diameter of 25 nm and an inner diameter of 15 nM. Alpha-beta heterodimers associate head-to-tail to form protofilaments running lengthwise along the microtubule wall with the beta-tubulin subunit facing the microtubule plus end conferring a structural polarity. Microtubules usually have 13 protofilaments but different protofilament numbers can be found in some organisms and specialized cells. Mg(2+) serves as cofactor. Post-translationally, some glutamate residues at the C-terminus are polyglycylated, resulting in polyglycine chains on the gamma-carboxyl group. Glycylation is mainly limited to tubulin incorporated into axonemes (cilia and flagella) whereas glutamylation is prevalent in neuronal cells, centrioles, axonemes, and the mitotic spindle. Both modifications can coexist on the same protein on adjacent residues, and lowering polyglycylation levels increases polyglutamylation, and reciprocally. The precise function of polyglycylation is still unclear. Some glutamate residues at the C-terminus are polyglutamylated, resulting in polyglutamate chains on the gamma-carboxyl group. Polyglutamylation plays a key role in microtubule severing by spastin (SPAST). SPAST preferentially recognizes and acts on microtubules decorated with short polyglutamate tails: severing activity by SPAST increases as the number of glutamates per tubulin rises from one to eight, but decreases beyond this glutamylation threshold. In terms of processing, acetylation of alpha chains at Lys-40 is located inside the microtubule lumen. This modification has been correlated with increased microtubule stability, intracellular transport and ciliary assembly. Post-translationally, undergoes a tyrosination/detyrosination cycle, the cyclic removal and re-addition of a C-terminal tyrosine residue by the enzymes tubulin tyrosine carboxypeptidase (MATCAP, VASH1 or VASH2) and tubulin tyrosine ligase (TTL), respectively. Tyrosination promotes microtubule interaction with CAP-Gly microtubule plus-end tracking proteins. Tyrosinated tubulins regulate the initiation of dynein-driven motility. In terms of processing, detyrosination is involved in metaphase plate congression by guiding chromosomes during mitosis. Detyrosination increases microtubules-dependent mechanotransduction in dystrophic cardiac and skeletal muscle. In cardiomyocytes, detyrosinated microtubules are required to resist to contractile compression during contraction. As to expression, testis specific.

It is found in the cytoplasm. Its subcellular location is the cytoskeleton. The catalysed reaction is GTP + H2O = GDP + phosphate + H(+). In terms of biological role, tubulin is the major constituent of microtubules, a cylinder consisting of laterally associated linear protofilaments composed of alpha- and beta-tubulin heterodimers. Microtubules grow by the addition of GTP-tubulin dimers to the microtubule end, where a stabilizing cap forms. Below the cap, tubulin dimers are in GDP-bound state, owing to GTPase activity of alpha-tubulin. In Oncorhynchus mykiss (Rainbow trout), this protein is Tubulin alpha chain, testis-specific.